A 250-amino-acid polypeptide reads, in one-letter code: Triosephosphate isomerase (250 aa).

9–11 (NWK) contributes to the substrate binding site. H96 (electrophile) is an active-site residue. Residue E166 is the Proton acceptor of the active site. Substrate contacts are provided by residues G172, S212, and 233-234 (GG).

This sequence belongs to the triosephosphate isomerase family. Homodimer.

It localises to the cytoplasm. The catalysed reaction is D-glyceraldehyde 3-phosphate = dihydroxyacetone phosphate. It participates in carbohydrate biosynthesis; gluconeogenesis. It functions in the pathway carbohydrate degradation; glycolysis; D-glyceraldehyde 3-phosphate from glycerone phosphate: step 1/1. Involved in the gluconeogenesis. Catalyzes stereospecifically the conversion of dihydroxyacetone phosphate (DHAP) to D-glyceraldehyde-3-phosphate (G3P). This chain is Triosephosphate isomerase, found in Chlorobium phaeovibrioides (strain DSM 265 / 1930) (Prosthecochloris vibrioformis (strain DSM 265)).